Here is a 394-residue protein sequence, read N- to C-terminus: Phosphoglycerate kinase (394 aa).

Substrate is bound by residues 21-23, Arg-37, 60-63, Arg-115, and Arg-148; these read DLN and HLGR. Residues Lys-199, Glu-321, and 347 to 350 each bind ATP; that span reads GGDT.

It belongs to the phosphoglycerate kinase family. As to quaternary structure, monomer.

Its subcellular location is the cytoplasm. The enzyme catalyses (2R)-3-phosphoglycerate + ATP = (2R)-3-phospho-glyceroyl phosphate + ADP. It participates in carbohydrate degradation; glycolysis; pyruvate from D-glyceraldehyde 3-phosphate: step 2/5. The sequence is that of Phosphoglycerate kinase from Azoarcus sp. (strain BH72).